A 118-amino-acid polypeptide reads, in one-letter code: Large ribosomal subunit protein uL22c (118 aa).

This sequence belongs to the universal ribosomal protein uL22 family. As to quaternary structure, part of the 50S ribosomal subunit.

The protein resides in the plastid. It is found in the chloroplast. This protein binds specifically to 23S rRNA. In terms of biological role, the globular domain of the protein is located near the polypeptide exit tunnel on the outside of the subunit, while an extended beta-hairpin is found that lines the wall of the exit tunnel in the center of the 70S ribosome. This chain is Large ribosomal subunit protein uL22c (rpl22), found in Physcomitrium patens (Spreading-leaved earth moss).